A 193-amino-acid chain; its full sequence is Outer membrane lipoprotein DolP (193 aa).

Residues 1 to 21 (MTLSPLKKLAILLGATIFLQG) form the signal peptide. Cysteine 22 carries N-palmitoyl cysteine lipidation. The S-diacylglycerol cysteine moiety is linked to residue cysteine 22. 2 consecutive BON domains span residues 48-117 (DDET…TVSP) and 126-193 (KDSW…KYLD).

This sequence belongs to the lipoprotein DolP family.

Its subcellular location is the cell outer membrane. Functionally, plays an important role in maintaining outer membrane integrity. The sequence is that of Outer membrane lipoprotein DolP from Haemophilus influenzae (strain ATCC 51907 / DSM 11121 / KW20 / Rd).